The sequence spans 369 residues: Developmentally-regulated G-protein 3 (369 aa).

In terms of domain architecture, OBG-type G spans 66 to 291 (SRVGLVGFPS…LLDKIWEYLD (226 aa)). Residues 72–79 (GFPSVGKS), 118–122 (DLPGI), and 249–252 (NKID) each bind GTP. The region spanning 291–367 (DLTRIYTKPK…EDEDVVQIVK (77 aa)) is the TGS domain.

This sequence belongs to the TRAFAC class OBG-HflX-like GTPase superfamily. OBG GTPase family.

Binds GDP and GTP, and has low GTPase activity in vitro. This is Developmentally-regulated G-protein 3 (DRG3) from Arabidopsis thaliana (Mouse-ear cress).